A 232-amino-acid polypeptide reads, in one-letter code: Phosphatidylserine decarboxylase proenzyme (232 aa).

The Schiff-base intermediate with substrate; via pyruvic acid role is filled by Ser190. Position 190 is a pyruvic acid (Ser); by autocatalysis (Ser190).

It belongs to the phosphatidylserine decarboxylase family. PSD-A subfamily. Heterodimer of a large membrane-associated beta subunit and a small pyruvoyl-containing alpha subunit. Pyruvate is required as a cofactor. Post-translationally, is synthesized initially as an inactive proenzyme. Formation of the active enzyme involves a self-maturation process in which the active site pyruvoyl group is generated from an internal serine residue via an autocatalytic post-translational modification. Two non-identical subunits are generated from the proenzyme in this reaction, and the pyruvate is formed at the N-terminus of the alpha chain, which is derived from the carboxyl end of the proenzyme. The post-translation cleavage follows an unusual pathway, termed non-hydrolytic serinolysis, in which the side chain hydroxyl group of the serine supplies its oxygen atom to form the C-terminus of the beta chain, while the remainder of the serine residue undergoes an oxidative deamination to produce ammonia and the pyruvoyl prosthetic group on the alpha chain.

Its subcellular location is the cell membrane. The catalysed reaction is a 1,2-diacyl-sn-glycero-3-phospho-L-serine + H(+) = a 1,2-diacyl-sn-glycero-3-phosphoethanolamine + CO2. It functions in the pathway phospholipid metabolism; phosphatidylethanolamine biosynthesis; phosphatidylethanolamine from CDP-diacylglycerol: step 2/2. In terms of biological role, catalyzes the formation of phosphatidylethanolamine (PtdEtn) from phosphatidylserine (PtdSer). The sequence is that of Phosphatidylserine decarboxylase proenzyme from Beijerinckia indica subsp. indica (strain ATCC 9039 / DSM 1715 / NCIMB 8712).